The following is a 225-amino-acid chain: Pyrimidine 5'-nucleotidase YjjG (225 aa).

The active-site Nucleophile is the D9.

It belongs to the HAD-like hydrolase superfamily. YjjG family. In terms of assembly, monomer, homodimer and possibly homotetramer in solution. Mn(2+) is required as a cofactor. The cofactor is Mg(2+). It depends on Co(2+) as a cofactor.

It is found in the cytoplasm. It catalyses the reaction a ribonucleoside 5'-phosphate + H2O = a ribonucleoside + phosphate. The catalysed reaction is a 2'-deoxyribonucleoside 5'-phosphate + H2O = a 2'-deoxyribonucleoside + phosphate. The enzyme catalyses UMP + H2O = uridine + phosphate. It carries out the reaction dUMP + H2O = 2'-deoxyuridine + phosphate. It catalyses the reaction dTMP + H2O = thymidine + phosphate. In contrast to nucleotidases from other families, is not inhibited by ribo- and deoxyribonucleoside di- and triphosphates. In terms of biological role, nucleotidase that shows high phosphatase activity toward non-canonical pyrimidine nucleotides and three canonical nucleoside 5'-monophosphates (UMP, dUMP, and dTMP), and very low activity against TDP, IMP, UDP, GMP, dGMP, AMP, dAMP, and 6-phosphogluconate. Appears to function as a house-cleaning nucleotidase in vivo, since the general nucleotidase activity of YjjG allows it to protect cells against non-canonical pyrimidine derivatives such as 5-fluoro-2'-deoxyuridine, 5-fluorouridine, 5-fluoroorotate, 5-fluorouracil, and 5-aza-2'-deoxycytidine, and prevents the incorporation of potentially mutagenic nucleotides into DNA. Its dUMP phosphatase activity that catalyzes the hydrolysis of dUMP to deoxyuridine is necessary for thymine utilization via the thymine salvage pathway. Is strictly specific to substrates with 5'-phosphates and shows no activity against nucleoside 2'- or 3'-monophosphates. This is Pyrimidine 5'-nucleotidase YjjG (yjjG) from Escherichia coli (strain K12).